The primary structure comprises 295 residues: MTSTINRPLDGEGSVQVKQDPKINIEEGALVIAVYGKGGIGKSTTSSNLSAAFSKLGKKVLQIGCDPKHDSTFTLTHKMVPTVIDILEEVDFHSEELRPTDFMFEGFNGVMCVESGGPPAGTGCGGYVTGQTVKLLKEHHLLEDTDVVIFDVLGDVVCGGFAAPLQHANYCLIVTANDFDSIFAMNRIVSAIKAKAKNYKVRLGGVVANRSKDTDQIDKFNERTGLKTMAHFKDVDAIRRSRLKKCTIFEMEPTEDVIEVQNEYLSLAKNMLENVEPLEGNPLKDREIFDLLGFD.

ATP-binding positions include 39 to 44 (GIGKST) and K68. S43 is a Mg(2+) binding site. Residues C124 and C158 each contribute to the [4Fe-4S] cluster site. 209 to 210 (NR) lines the ATP pocket.

It belongs to the NifH/BchL/ChlL family. In terms of assembly, homodimer. Protochlorophyllide reductase is composed of three subunits; ChlL, ChlN and ChlB. The cofactor is [4Fe-4S] cluster.

The enzyme catalyses chlorophyllide a + oxidized 2[4Fe-4S]-[ferredoxin] + 2 ADP + 2 phosphate = protochlorophyllide a + reduced 2[4Fe-4S]-[ferredoxin] + 2 ATP + 2 H2O. It participates in porphyrin-containing compound metabolism; chlorophyll biosynthesis (light-independent). Component of the dark-operative protochlorophyllide reductase (DPOR) that uses Mg-ATP and reduced ferredoxin to reduce ring D of protochlorophyllide (Pchlide) to form chlorophyllide a (Chlide). This reaction is light-independent. The L component serves as a unique electron donor to the NB-component of the complex, and binds Mg-ATP. The sequence is that of Light-independent protochlorophyllide reductase iron-sulfur ATP-binding protein from Prochlorococcus marinus (strain AS9601).